Here is a 175-residue protein sequence, read N- to C-terminus: NADH-ubiquinone oxidoreductase chain 6 (175 aa).

The next 6 membrane-spanning stretches (helical) occupy residues 1–21, 25–45, 47–67, 87–107, 116–136, and 149–169; these read MMAYIGFILSIMFVISFVGFS, SPIYGGLVLIMSGGFGCGIVM, FGGSFLGLMVFLIYLGGMLVV, AAVLGAFVLGVLMEVVLVLYV, VFNFSGVGDWAVSDNGGFGVF, and YGVWIIIVTGWSLFVGVLVIL.

This sequence belongs to the complex I subunit 6 family. In terms of assembly, core subunit of respiratory chain NADH dehydrogenase (Complex I) which is composed of 45 different subunits.

Its subcellular location is the mitochondrion inner membrane. The catalysed reaction is a ubiquinone + NADH + 5 H(+)(in) = a ubiquinol + NAD(+) + 4 H(+)(out). In terms of biological role, core subunit of the mitochondrial membrane respiratory chain NADH dehydrogenase (Complex I) which catalyzes electron transfer from NADH through the respiratory chain, using ubiquinone as an electron acceptor. Essential for the catalytic activity and assembly of complex I. The polypeptide is NADH-ubiquinone oxidoreductase chain 6 (MT-ND6) (Ceratotherium simum (White rhinoceros)).